Here is a 609-residue protein sequence, read N- to C-terminus: Alpha-fetoprotein (609 aa).

The first 18 residues, 1 to 18 (MKWVVSILLIFLLNSTES), serve as a signal peptide directing secretion. 3 consecutive Albumin domains span residues 19–210 (RTMH…ATIT), 211–402 (KELR…EELQ), and 403–601 (KYIQ…QLIS). Residue His-22 participates in Cu(2+) binding. Intrachain disulfides connect Cys-99–Cys-114, Cys-113–Cys-124, Cys-148–Cys-193, Cys-192–Cys-201, Cys-224–Cys-270, Cys-269–Cys-277, Cys-289–Cys-303, and Cys-302–Cys-313. Residues Ser-111 and Ser-115 each carry the phosphoserine modification. N-linked (GlcNAc...) asparagine glycosylation is present at Asn-251. Ser-344 bears the Phosphoserine mark. 7 disulfides stabilise this stretch: Cys-384–Cys-393, Cys-416–Cys-462, Cys-461–Cys-472, Cys-485–Cys-501, Cys-500–Cys-511, Cys-538–Cys-583, and Cys-582–Cys-591.

The protein belongs to the ALB/AFP/VDB family. Dimeric and trimeric forms have been found in addition to the monomeric form. In terms of processing, sulfated. In terms of tissue distribution, plasma.

It is found in the secreted. In terms of biological role, binds copper, nickel, and fatty acids as well as, and bilirubin less well than, serum albumin. The polypeptide is Alpha-fetoprotein (AFP) (Equus caballus (Horse)).